The sequence spans 496 residues: tRNA-2-methylthio-N(6)-dimethylallyladenosine synthase (496 aa).

The MTTase N-terminal domain occupies 43 to 160 (KKVFVTTQGC…LPELYDQSHQ (118 aa)). Positions 52, 89, 123, 204, 208, and 211 each coordinate [4Fe-4S] cluster. Residues 190–422 (RVEGFKAFVS…QKVIIDSTLA (233 aa)) form the Radical SAM core domain. Residues 425–493 (HEMVGTTTRV…PHMVKGEIEA (69 aa)) enclose the TRAM domain.

Belongs to the methylthiotransferase family. MiaB subfamily. In terms of assembly, monomer. [4Fe-4S] cluster serves as cofactor.

The protein resides in the cytoplasm. The enzyme catalyses N(6)-dimethylallyladenosine(37) in tRNA + (sulfur carrier)-SH + AH2 + 2 S-adenosyl-L-methionine = 2-methylsulfanyl-N(6)-dimethylallyladenosine(37) in tRNA + (sulfur carrier)-H + 5'-deoxyadenosine + L-methionine + A + S-adenosyl-L-homocysteine + 2 H(+). In terms of biological role, catalyzes the methylthiolation of N6-(dimethylallyl)adenosine (i(6)A), leading to the formation of 2-methylthio-N6-(dimethylallyl)adenosine (ms(2)i(6)A) at position 37 in tRNAs that read codons beginning with uridine. In Psychrobacter arcticus (strain DSM 17307 / VKM B-2377 / 273-4), this protein is tRNA-2-methylthio-N(6)-dimethylallyladenosine synthase.